Reading from the N-terminus, the 284-residue chain is NH(3)-dependent NAD(+) synthetase (284 aa).

41 to 48 (GLSGGVDS) provides a ligand contact to ATP. Asp47 contributes to the Mg(2+) binding site. Arg127 is a deamido-NAD(+) binding site. Thr147 contributes to the ATP binding site. Residue Glu152 coordinates Mg(2+). Asp167 is a binding site for deamido-NAD(+). Lys176 and Ser199 together coordinate ATP. A disordered region spans residues 264 to 284 (FKRRPAPGLDLPEPEDPAMSG). Residues 275-284 (PEPEDPAMSG) show a composition bias toward acidic residues.

It belongs to the NAD synthetase family. In terms of assembly, homodimer.

It carries out the reaction deamido-NAD(+) + NH4(+) + ATP = AMP + diphosphate + NAD(+) + H(+). It functions in the pathway cofactor biosynthesis; NAD(+) biosynthesis; NAD(+) from deamido-NAD(+) (ammonia route): step 1/1. Functionally, catalyzes the ATP-dependent amidation of deamido-NAD to form NAD. Uses ammonia as a nitrogen source. The sequence is that of NH(3)-dependent NAD(+) synthetase from Methanopyrus kandleri (strain AV19 / DSM 6324 / JCM 9639 / NBRC 100938).